The following is a 216-amino-acid chain: Dimethylamine corrinoid protein 1 (216 aa).

Positions 1-91 (MTSKEELLQE…DMPAGTETKK (91 aa)) constitute a B12-binding N-terminal domain. Residues 92-216 (LGVIVNGTVE…AKAKELLVGK (125 aa)) form the B12-binding domain. Residue H105 participates in methylcob(III)alamin binding.

Belongs to the methylamine corrinoid protein family.

It participates in one-carbon metabolism; methanogenesis from dimethylamine. Functionally, acts as a methyl group carrier between MtbB and MtbA. The sequence is that of Dimethylamine corrinoid protein 1 (mtbC1) from Methanosarcina mazei (strain ATCC BAA-159 / DSM 3647 / Goe1 / Go1 / JCM 11833 / OCM 88) (Methanosarcina frisia).